The sequence spans 723 residues: Transmembrane channel-like protein 7 (723 aa).

A disordered region spans residues 1 to 21; it reads MSESSASALQLGRPSRQPAVH. The Extracellular segment spans residues 1–168; the sequence is MSESSASALQ…GIQSYFSFLR (168 aa). A glycan (N-linked (GlcNAc...) asparagine) is linked at asparagine 24. Residues 51–70 are disordered; it reads RRRTTVHSRDKQSGTLLKST. N-linked (GlcNAc...) asparagine glycosylation occurs at asparagine 84. Phosphoserine is present on serine 89. An N-linked (GlcNAc...) asparagine glycan is attached at asparagine 96. A helical membrane pass occupies residues 169–189; the sequence is FLVLLNLVIFLIIFMLVLLPI. Residues 190–219 are Cytoplasmic-facing; sequence LLTKYKITNSSFVLIPFKDTDIQCTVYPVS. The chain crosses the membrane as a helical span at residues 220-240; that stretch reads SSGLIYFYSYIIDLLSGTGFL. Residues 241–263 are Extracellular-facing; that stretch reads EETSLFYGHYTIDGVKFQNFTYD. Residue asparagine 259 is glycosylated (N-linked (GlcNAc...) asparagine). The helical transmembrane segment at 264-284 threads the bilayer; the sequence is LPLAYLISTIAYLALSLLWIV. The Cytoplasmic segment spans residues 285-362; it reads KRSVEGFKIN…EETIRIYSLR (78 aa). The chain crosses the membrane as a helical span at residues 363 to 383; it reads LFLNCIVLAVLGACFYAIYVA. At 384–404 the chain is on the extracellular side; that stretch reads TVFSQEHMKKEIDKMVFGENL. Residues 405–425 form a helical membrane-spanning segment; sequence LILYLPSIVITLANFITPMIF. Residues 426–494 lie on the Cytoplasmic side of the membrane; it reads AKIIRYEDYS…PCWETQVGQE (69 aa). A helical membrane pass occupies residues 495 to 515; that stretch reads MYKLMIFDFIIILAVTLFVDF. At 516–555 the chain is on the extracellular side; the sequence is PRKLLVTYCSSWKLIQCWGQQEFAIPDNVLGIVYGQTICW. A helical membrane pass occupies residues 556-576; sequence IGAFFSPLLPAIATLKFIIIF. Over 577-601 the chain is Cytoplasmic; that stretch reads YVKEWSLLYTCRPSPRPFRASNSNF. The helical transmembrane segment at 602–622 threads the bilayer; it reads FFLLVLLIGLCLAIIPLTISI. The Extracellular segment spans residues 623-665; sequence SRIPSSKACGPFTNFNTTWEVIPKTVSTFPSSLQSFIHGVTSE. Asparagine 638 carries N-linked (GlcNAc...) asparagine glycosylation. The helical transmembrane segment at 666-686 threads the bilayer; that stretch reads AFAVPFFMIICLIMFYFIALA. Over 687 to 723 the chain is Cytoplasmic; it reads GAHKRVVIQLREQLSLESRDKRYLIQKLTEAQRDTRN.

It belongs to the TMC family. Interacts with PIEZO2; the interaction inhibits PIEZO2-conducted mechanically activated currents.

The protein resides in the membrane. Its function is as follows. Acts as an inhibitory modulator of PIEZO2 mechanosensitive channel in dorsal root ganglion (DRG) neurons through physical interactions or interference with the interaction between Piezo2 and the cytoskeleton. The protein is Transmembrane channel-like protein 7 (TMC7) of Macaca fascicularis (Crab-eating macaque).